Consider the following 69-residue polypeptide: Large ribosomal subunit protein bL31 (69 aa).

Residues Cys-17, Cys-19, Cys-37, and Cys-40 each contribute to the Zn(2+) site.

The protein belongs to the bacterial ribosomal protein bL31 family. Type A subfamily. As to quaternary structure, part of the 50S ribosomal subunit. Requires Zn(2+) as cofactor.

Its function is as follows. Binds the 23S rRNA. This chain is Large ribosomal subunit protein bL31, found in Clostridium novyi (strain NT).